Reading from the N-terminus, the 477-residue chain is Adenosylhomocysteinase (477 aa).

Substrate is bound by residues threonine 63, aspartate 142, and glutamate 202. NAD(+) is bound at residue 203–205 (TTT). Residues lysine 232 and aspartate 236 each coordinate substrate. Residues asparagine 237, 266 to 271 (GYGDVG), glutamate 289, asparagine 324, 345 to 347 (IGH), and asparagine 390 each bind NAD(+).

The protein belongs to the adenosylhomocysteinase family. The cofactor is NAD(+).

The protein resides in the cytoplasm. The enzyme catalyses S-adenosyl-L-homocysteine + H2O = L-homocysteine + adenosine. It functions in the pathway amino-acid biosynthesis; L-homocysteine biosynthesis; L-homocysteine from S-adenosyl-L-homocysteine: step 1/1. In terms of biological role, may play a key role in the regulation of the intracellular concentration of adenosylhomocysteine. The polypeptide is Adenosylhomocysteinase (Methylibium petroleiphilum (strain ATCC BAA-1232 / LMG 22953 / PM1)).